A 97-amino-acid chain; its full sequence is Co-chaperonin GroES (97 aa).

The protein belongs to the GroES chaperonin family. As to quaternary structure, heptamer of 7 subunits arranged in a ring. Interacts with the chaperonin GroEL.

It localises to the cytoplasm. Functionally, together with the chaperonin GroEL, plays an essential role in assisting protein folding. The GroEL-GroES system forms a nano-cage that allows encapsulation of the non-native substrate proteins and provides a physical environment optimized to promote and accelerate protein folding. GroES binds to the apical surface of the GroEL ring, thereby capping the opening of the GroEL channel. The sequence is that of Co-chaperonin GroES from Symbiobacterium thermophilum (strain DSM 24528 / JCM 14929 / IAM 14863 / T).